The sequence spans 84 residues: Large ribosomal subunit protein bL27 (84 aa).

Residues 1–21 form a disordered region; the sequence is MAHKKGGGSTKNGRDSNPKYL.

This sequence belongs to the bacterial ribosomal protein bL27 family.

This chain is Large ribosomal subunit protein bL27, found in Pelodictyon phaeoclathratiforme (strain DSM 5477 / BU-1).